The sequence spans 585 residues: Arginine--tRNA ligase (585 aa).

Residues 131–141 carry the 'HIGH' region motif; sequence ANPTGPMHVGH.

Belongs to the class-I aminoacyl-tRNA synthetase family. As to quaternary structure, monomer.

The protein resides in the cytoplasm. The enzyme catalyses tRNA(Arg) + L-arginine + ATP = L-arginyl-tRNA(Arg) + AMP + diphosphate. The sequence is that of Arginine--tRNA ligase from Bartonella tribocorum (strain CIP 105476 / IBS 506).